Consider the following 428-residue polypeptide: D-inositol 3-phosphate glycosyltransferase (428 aa).

His17 contacts 1D-myo-inositol 3-phosphate. UDP-N-acetyl-alpha-D-glucosamine contacts are provided by residues 23–24 and Gly31; that span reads QP. 1D-myo-inositol 3-phosphate contacts are provided by residues 28–33, Arg86, Tyr119, Thr143, and Arg163; that span reads DAGGMN. UDP-N-acetyl-alpha-D-glucosamine-binding residues include Arg237 and Lys242. Positions 312, 313, and 315 each coordinate Mg(2+). UDP-N-acetyl-alpha-D-glucosamine-binding residues include Glu325 and Glu333. Thr339 is a binding site for Mg(2+).

The protein belongs to the glycosyltransferase group 1 family. MshA subfamily. Homodimer.

It catalyses the reaction 1D-myo-inositol 3-phosphate + UDP-N-acetyl-alpha-D-glucosamine = 1D-myo-inositol 2-acetamido-2-deoxy-alpha-D-glucopyranoside 3-phosphate + UDP + H(+). Functionally, catalyzes the transfer of a N-acetyl-glucosamine moiety to 1D-myo-inositol 3-phosphate to produce 1D-myo-inositol 2-acetamido-2-deoxy-glucopyranoside 3-phosphate in the mycothiol biosynthesis pathway. In Thermobispora bispora (strain ATCC 19993 / DSM 43833 / CBS 139.67 / JCM 10125 / KCTC 9307 / NBRC 14880 / R51), this protein is D-inositol 3-phosphate glycosyltransferase.